Here is a 228-residue protein sequence, read N- to C-terminus: UPF0758 protein str1465 (228 aa).

Residues 103–225 form the MPN domain; the sequence is QIMSSQQVAR…YYSFREERED (123 aa). Positions 174, 176, and 187 each coordinate Zn(2+). The JAMM motif motif lies at 174–187; it reads HNHPSGEAYPSRND.

It belongs to the UPF0758 family.

The chain is UPF0758 protein str1465 from Streptococcus thermophilus (strain CNRZ 1066).